Consider the following 109-residue polypeptide: Prefoldin subunit 1 (109 aa).

S2 carries the N-acetylserine modification.

The protein belongs to the prefoldin subunit beta family. As to quaternary structure, heterohexamer of two PFD-alpha type and four PFD-beta type subunits.

It localises to the cytoplasm. In terms of biological role, binds specifically to cytosolic chaperonin (c-CPN) and transfers target proteins to it. Binds to nascent polypeptide chain and promotes folding in an environment in which there are many competing pathways for nonnative proteins. The protein is Prefoldin subunit 1 (PFD1) of Saccharomyces cerevisiae (strain ATCC 204508 / S288c) (Baker's yeast).